The chain runs to 1372 residues: MAQQTFTGRKRVRKFFGHIKEVAEMPNLIEVQKASYDQFLMVDEPTGGRPDEGLQAVFRSVFPISDFSGTSMLEFVRYEFEPPKYDVDECRQRGMTFAAPLKVTLRLIVFDIDEETGAKSVKDIKEQDVYMGDIPLMTMNGTFIVNGTERVIVSQMHRSPGVFFDHDKGKTHSSGKLLFAARVIPYRGSWLDIEFDAKDIVFARIDRRRKLPVTSLMFALGLDGEQILATFYKKLIYKRIKEGWRVPFDANRFRGYSTVNDLIDADTGKVVLEAGKKLTVRAARQLQEKGLKALRMSDEELLGNYIAEDLVNPKTGEIYAEAGEEITDKLFKVLNEQGYKDLPLLDIDHVNVGPYIRNTLSADKNMTREDALFDIYRVMRPGEPPTLDSAQAMFQSLFFDAERYDLSAVGRVKMNMRLELDAPDTQRTLRKEDILAVIKTLVDLRDGKGEIDDIDHLGNRRVRSVGELMENQYRIGLLRMERAIKERMSSVDIDTVMPQDLINAKPAAAAVREFFGSSQLSQFMDQTNPLSEITHKRRLSALGPGGLTRERAGFEVRDVHPTHYGRICPIETPEGPNIGLINSLATFARVNKYGFVETPYRKVKDGRVTDEVVYLSAMEEGRYRVAQANVPLDAKGRFTEDLVVCRHAGEVVPMTPDKVDYMDVSPKQLVSVAAALIPFLENDDANRALMGSNMQRQAVPLVRAEAPFVGTGMEGVVARDSGAAIAARRSGVIDQIDATRVVIRATEDLDPTKSGVDIYRLMKFQRSNQSTCINQRPLVKVGDIVKKGDIIADGPSTDLGELALGRNVLVAFMPWNGYNFEDSILLSERIVKEDVFTSIHIEEFEVMARDTKLGPEEITRDIPNVSEEALKNLDEAGIVYIGAEVRAGDILVGKITPKGESPMTPEEKLLRAIFGEKASDVRDTSLRVPPGVQGTIVEVRVFNRHGVDKDERALAIEREEIERLAKDRDDEQAILDRNVYSRLADMLDGRQGISGPKGFKKDTKITRAVLDEYPKSQWWLFAASNDKLMAEIEAMRKQYDESKKGLEQRFLDKVEKLQRGDELPPGVMKMVKVFVAVKRKIQPGDKMAGRHGNKGVVSKIVPIEDMPFLEDGTHADIVLNPLGVPSRMNVGQILETHLGWACAGLGKRIAQTVDAYLSKQDVKPLKETLKRIYGEDETIKTLNDNELLELGHNLSRGVPIATPVFDGAKESDIEEMLKLAGMDASGQSTVYDGRTGDPFDRKVTVGYIYMLKLHHLVDDKIHARSIGPYSLVTQQPLGGKAQFGGQRFGEMEVWALEAYGAAYTLQEMLTVKSDDVAGRTKVYEAIVRGDDTFEAGIPESFNVLVKEMRSLGLNVDLHNSKLGPAPTSEAAE.

It belongs to the RNA polymerase beta chain family. As to quaternary structure, the RNAP catalytic core consists of 2 alpha, 1 beta, 1 beta' and 1 omega subunit. When a sigma factor is associated with the core the holoenzyme is formed, which can initiate transcription.

It carries out the reaction RNA(n) + a ribonucleoside 5'-triphosphate = RNA(n+1) + diphosphate. Functionally, DNA-dependent RNA polymerase catalyzes the transcription of DNA into RNA using the four ribonucleoside triphosphates as substrates. The chain is DNA-directed RNA polymerase subunit beta from Bradyrhizobium sp. (strain ORS 278).